Consider the following 798-residue polypeptide: Exo-1,4-beta-xylosidase xlnD (798 aa).

Residues 1–20 (MPGAASIVAVLAALLPTALG) form the signal peptide. N-linked (GlcNAc...) asparagine glycosylation is found at Asn23, Asn87, Asn142, and Asn237. Asp310 is a catalytic residue. Residues Asn326, Asn391, Asn404, Asn443, Asn480, Asn522, Asn618, Asn645, Asn658, Asn685, and Asn707 are each glycosylated (N-linked (GlcNAc...) asparagine).

The protein belongs to the glycosyl hydrolase 3 family.

It is found in the secreted. The catalysed reaction is Hydrolysis of (1-&gt;4)-beta-D-xylans, to remove successive D-xylose residues from the non-reducing termini.. It functions in the pathway glycan degradation; xylan degradation. Its function is as follows. Xylan 1,4-beta-xylosidase involved in the hydrolysis of xylan, a major structural heterogeneous polysaccharide found in plant biomass representing the second most abundant polysaccharide in the biosphere, after cellulose. This is Exo-1,4-beta-xylosidase xlnD (xlnD) from Aspergillus oryzae (strain ATCC 42149 / RIB 40) (Yellow koji mold).